A 507-amino-acid chain; its full sequence is Wax ester synthase/diacylglycerol acyltransferase 5 (507 aa).

The Cytoplasmic segment spans residues Met-1–Arg-211. His-161 serves as the catalytic Proton acceptor. Residues Phe-212–Asp-232 form a helical membrane-spanning segment. At Ala-233–Gln-507 the chain is on the lumenal side. N-linked (GlcNAc...) asparagine glycans are attached at residues Asn-314 and Asn-421.

In the N-terminal section; belongs to the long-chain O-acyltransferase family. Mostly expressed in flowers and siliques.

It localises to the cell membrane. The protein resides in the endoplasmic reticulum membrane. The enzyme catalyses a long chain fatty alcohol + a fatty acyl-CoA = a wax ester + CoA. It catalyses the reaction an acyl-CoA + a 1,2-diacyl-sn-glycerol = a triacyl-sn-glycerol + CoA. The protein operates within glycerolipid metabolism; triacylglycerol biosynthesis. It participates in lipid metabolism. In terms of biological role, bifunctional wax ester synthase/diacylglycerol acyltransferase. Involved in cuticular wax biosynthesis. This is Wax ester synthase/diacylglycerol acyltransferase 5 from Arabidopsis thaliana (Mouse-ear cress).